The sequence spans 372 residues: tRNA-specific 2-thiouridylase MnmA (372 aa).

ATP is bound by residues 9–16 (GMSGGVDS) and M35. The interaction with target base in tRNA stretch occupies residues 95–97 (NPD). C100 acts as the Nucleophile in catalysis. C100 and C201 are disulfide-bonded. G124 contacts ATP. The interaction with tRNA stretch occupies residues 151 to 153 (KDQ). Residue C201 is the Cysteine persulfide intermediate of the active site. The tract at residues 317-318 (RY) is interaction with tRNA.

Belongs to the MnmA/TRMU family.

The protein resides in the cytoplasm. The enzyme catalyses S-sulfanyl-L-cysteinyl-[protein] + uridine(34) in tRNA + AH2 + ATP = 2-thiouridine(34) in tRNA + L-cysteinyl-[protein] + A + AMP + diphosphate + H(+). In terms of biological role, catalyzes the 2-thiolation of uridine at the wobble position (U34) of tRNA, leading to the formation of s(2)U34. The chain is tRNA-specific 2-thiouridylase MnmA from Herminiimonas arsenicoxydans.